Here is a 562-residue protein sequence, read N- to C-terminus: Putative transport protein YE1478 (562 aa).

6 consecutive transmembrane segments (helical) span residues 8–28, 32–52, 66–86, 94–114, 118–138, and 158–178; these read LLNG…LCLG, LGPI…LLGQ, FMLF…SIFF, MLAL…GKLF, IGLT…LVGA, and NLSL…ILGA. RCK C-terminal domains lie at 202 to 288 and 290 to 373; these read LDTD…SFRN and KEVF…KIGF. The next 5 membrane-spanning stretches (helical) occupy residues 383-403, 406-426, 447-467, 475-495, and 541-561; these read LLAF…TFQF, FSFG…LGFL, FGLM…INSS, MLIS…IFGA, and IANV…PGIL.

It belongs to the AAE transporter (TC 2.A.81) family. YbjL subfamily.

Its subcellular location is the cell membrane. The sequence is that of Putative transport protein YE1478 from Yersinia enterocolitica serotype O:8 / biotype 1B (strain NCTC 13174 / 8081).